The chain runs to 444 residues: tRNA modification GTPase MnmE (444 aa).

The (6S)-5-formyl-5,6,7,8-tetrahydrofolate site is built by R28, E86, and R126. The TrmE-type G domain maps to 224–368 (GFCVVLAGAP…LLDAIQGSAA (145 aa)). K(+) is bound at residue N234. GTP is bound by residues 234–239 (NAGKST), 253–259 (SDIPGTT), and 278–281 (DTAG). S238 is a Mg(2+) binding site. Positions 253, 255, and 258 each coordinate K(+). Residue T259 participates in Mg(2+) binding. A (6S)-5-formyl-5,6,7,8-tetrahydrofolate-binding site is contributed by K444.

It belongs to the TRAFAC class TrmE-Era-EngA-EngB-Septin-like GTPase superfamily. TrmE GTPase family. In terms of assembly, homodimer. Heterotetramer of two MnmE and two MnmG subunits. K(+) serves as cofactor.

Its subcellular location is the cytoplasm. Exhibits a very high intrinsic GTPase hydrolysis rate. Involved in the addition of a carboxymethylaminomethyl (cmnm) group at the wobble position (U34) of certain tRNAs, forming tRNA-cmnm(5)s(2)U34. In Methylorubrum populi (strain ATCC BAA-705 / NCIMB 13946 / BJ001) (Methylobacterium populi), this protein is tRNA modification GTPase MnmE.